Consider the following 612-residue polypeptide: Arginine--tRNA ligase (612 aa).

The 'HIGH' region motif lies at 152–162 (PNIAKEMHVGH).

This sequence belongs to the class-I aminoacyl-tRNA synthetase family. As to quaternary structure, monomer.

It is found in the cytoplasm. It catalyses the reaction tRNA(Arg) + L-arginine + ATP = L-arginyl-tRNA(Arg) + AMP + diphosphate. The polypeptide is Arginine--tRNA ligase (Prochlorococcus marinus (strain MIT 9313)).